Reading from the N-terminus, the 505-residue chain is Maturase K (505 aa).

The protein belongs to the intron maturase 2 family. MatK subfamily.

The protein localises to the plastid. The protein resides in the chloroplast. Its function is as follows. Usually encoded in the trnK tRNA gene intron. Probably assists in splicing its own and other chloroplast group II introns. The polypeptide is Maturase K (Coffea arabica (Arabian coffee)).